Reading from the N-terminus, the 75-residue chain is Anionic peptide (75 aa).

Positions 1 to 24 (MVSKSLIVLLLVSVLVSTFYTSEA) are cleaved as a signal peptide.

The protein belongs to the non-disulfide-bridged peptide (NDBP) superfamily. Expressed by the venom gland.

The protein resides in the secreted. This chain is Anionic peptide, found in Tityus discrepans (Venezuelan scorpion).